The primary structure comprises 79 residues: Apolipoprotein C-II (79 aa).

The first 21 residues, 1 to 21 (MDLKVVAVSFLLLVLCSEAAG), serve as a signal peptide directing secretion. Residues 45–52 (GVEKLRDI) form a lipid binding region. The segment at 56-79 (SVDAVGTYTSILTDQLYHWWCGEQ) is lipoprotein lipase cofactor.

It belongs to the apolipoprotein C2 family. In terms of processing, proapolipoprotein C-II is synthesized as a sialic acid containing glycoprotein which is subsequently desialylated prior to its proteolytic processing. Proapolipoprotein C-II, the major form found in plasma undergoes proteolytic cleavage of its N-terminal hexapeptide to generate apolipoprotein C-II, which occurs as the minor form in plasma.

It localises to the secreted. Component of chylomicrons, very low-density lipoproteins (VLDL), low-density lipoproteins (LDL), and high-density lipoproteins (HDL) in plasma. Plays an important role in lipoprotein metabolism as an activator of lipoprotein lipase. Both proapolipoprotein C-II and apolipoprotein C-II can activate lipoprotein lipase. In Alligator mississippiensis (American alligator), this protein is Apolipoprotein C-II (APOC2).